Consider the following 385-residue polypeptide: Odorant receptor 47a (385 aa).

Over 1 to 33 (MDSFLQVQKSTIALLGFDLFSENREMWKRPYRA) the chain is Cytoplasmic. A helical membrane pass occupies residues 34–54 (MNVFSIAAIFPFILAAVLHNW). Residues 55–62 (KNVLLLAD) are Extracellular-facing. The chain crosses the membrane as a helical span at residues 63–83 (AMVALLITILGLFKFSMILYL). Topologically, residues 84-129 (RRDFKRLIDKFRLLMSNEAEQGEEYAEILNAANKQDQRMCTLFRTC) are cytoplasmic. The chain crosses the membrane as a helical span at residues 130-150 (FLLAWALNSVLPLVRMGLSYW). The Extracellular segment spans residues 151-175 (LAGHAEPELPFPCLFPWNIHIIRNY). A helical transmembrane segment spans residues 176-196 (VLSFIWSAFASTGVVLPAVSL). At 197–255 (DTIFCSFTSNLCAFFKIAQYKVVRFKGGSLKESQATLNKVFALYQTSLDMCNDLNQCYQ) the chain is on the cytoplasmic side. The chain crosses the membrane as a helical span at residues 256–276 (PIICAQFFISSLQLCMLGYLF). Residues 277 to 284 (SITFAQTE) lie on the Extracellular side of the membrane. Residues 285 to 305 (GVYYASFIATIIIQAYIYCYC) form a helical membrane-spanning segment. Residues 306–357 (GENLKTESASFEWAIYDSPWHESLGAGGASTSICRSLLISMMRAHRGFRITG) lie on the Cytoplasmic side of the membrane. A helical transmembrane segment spans residues 358-378 (YFFEANMEAFSSIVRTAMSYI). Residues 379–385 (TMLRSFS) are Extracellular-facing.

The protein belongs to the insect chemoreceptor superfamily. Heteromeric odorant receptor channel (TC 1.A.69) family. Or1a subfamily. As to quaternary structure, interacts with Orco. Complexes exist early in the endomembrane system in olfactory sensory neurons (OSNs), coupling these complexes to the conserved ciliary trafficking pathway. As to expression, expressed with Orco in 40 olfactory receptor neurons in a broad area across the antenna, including both anterior and posterior faces. This expression pattern matches the distribution of the small sensilla basiconica. Expression in the antenna is observed late in antennal development at 93 hours APF.

It localises to the cell membrane. In terms of biological role, odorant receptor which mediates acceptance or avoidance behavior, depending on its substrates. The odorant receptor repertoire encodes a large collection of odor stimuli that vary widely in identity, intensity, and duration. Complexes with Orco to form odorant-sensing units, providing sensitive and prolonged odorant signaling and calcium permeability. They are necessary and sufficient to promote functional reconstitution of odor-evoked signaling in sensory neurons that normally respond only to carbon dioxide. Involved in the behavioral responses to esters. Involved in the behavioral responses to pentyl acetate. In Drosophila melanogaster (Fruit fly), this protein is Odorant receptor 47a (Or47a).